A 602-amino-acid polypeptide reads, in one-letter code: DEAD-box ATP-dependent RNA helicase 52A (602 aa).

A disordered region spans residues 9 to 31 (KSVEAGGEPGGGGGGAWSTVSRS). Positions 15–24 (GEPGGGGGGA) are enriched in gly residues. The Q motif motif lies at 84–112 (DGFEAAGLVEAVLRNVARCGYESPTPVQR). The 191-residue stretch at 115-305 (MPIALAGRDL…SDFLSNYIFI (191 aa)) folds into the Helicase ATP-binding domain. Position 128–135 (128–135 (AQTGSGKT)) interacts with ATP. The short motif at 249-252 (DEAD) is the DEAD box element. In terms of domain architecture, Helicase C-terminal spans 328 to 485 (EKRGYLLDLL…DVPDWLVQYA (158 aa)). Disordered regions lie at residues 492–521 (GSSY…SGGG) and 552–602 (RGGG…SGWD). Gly residues predominate over residues 552–574 (RGGGYSRGGRGGYSGGGGGGGGD).

The protein belongs to the DEAD box helicase family. DDX3/DED1 subfamily.

The enzyme catalyses ATP + H2O = ADP + phosphate + H(+). The sequence is that of DEAD-box ATP-dependent RNA helicase 52A from Oryza sativa subsp. japonica (Rice).